Here is a 49-residue protein sequence, read N- to C-terminus: Light-harvesting protein B800/850/890 alpha-3 chain (49 aa).

Over 1–14 (MNQARIWLVVKPSV) the chain is Cytoplasmic. A helical transmembrane segment spans residues 15–35 (GLPLLLGVVLLIALLVHGAIL). Position 31 (His-31) interacts with a bacteriochlorophyll. Over 36–49 (TNTSWYPTYFEGNW) the chain is Periplasmic.

This sequence belongs to the antenna complex alpha subunit family. In terms of assembly, the core complex is formed by different alpha and beta chains, binding bacteriochlorophyll molecules, and arranged most probably in tetrameric structures disposed around the reaction center. The non-pigmented gamma chains may constitute additional components.

It is found in the cell inner membrane. Its function is as follows. Antenna complexes are light-harvesting systems, which transfer the excitation energy to the reaction centers. This Halorhodospira halophila (strain DSM 244 / SL1) (Ectothiorhodospira halophila (strain DSM 244 / SL1)) protein is Light-harvesting protein B800/850/890 alpha-3 chain.